The primary structure comprises 1544 residues: Protein mahjong (1544 aa).

Positions 1-110 (MSEGSGSENA…AAADRRQATK (110 aa)) are disordered. Over residues 10–35 (AAAAEAAAEAEAATEAALMAEAVAVA) the composition is skewed to low complexity. Residues 38-91 (SDEEEQPEAEDMPEQAGDNQEEDAAEQQDGGEPEADEDADADDAMSVENAENES) show a composition bias toward acidic residues. Phosphoserine occurs at positions 565 and 569. Residues 912–944 (NKQQLYQLIFEHLESNGLSQTAQMLQREVGLPL) enclose the LisH domain. 2 disordered regions span residues 946-973 (TPTTRSFHQSPFDYKSLPSGSSSLSRNR) and 987-1059 (GNGD…LAED). Position 955 is a phosphoserine (serine 955). Residues 961–971 (SLPSGSSSLSR) are compositionally biased toward low complexity. Polar residues predominate over residues 1016–1027 (PNFSSLNTTQTP). Short sequence motifs (DWD box) lie at residues 1302-1309 (VLWDVRSG) and 1338-1345 (EVWDLRTF). Disordered stretches follow at residues 1447 to 1475 (KSERSEEEDDEEVPESDEDGSDTGSENTF) and 1487 to 1544 (LRNL…SSDD). Composition is skewed to acidic residues over residues 1451-1467 (SEEEDDEEVPESDEDGS) and 1495-1535 (NDDE…DVLE).

Belongs to the VPRBP/DCAF1 family. As to quaternary structure, component of the CUL4-RBX1-DDB1-DCAF1 E3 ubiquitin-protein ligase complex. Interacts with l(2)gl.

The protein resides in the nucleus. It functions in the pathway protein modification; protein ubiquitination. Functionally, probable substrate recognition component of tsome E3 ubiquitin-protein ligase complex. Plays a key role in cell competition via its interaction with l(2)gl. This is Protein mahjong (mahj) from Drosophila melanogaster (Fruit fly).